Reading from the N-terminus, the 438-residue chain is Adenylosuccinate synthetase (438 aa).

GTP contacts are provided by residues 13-19 and 41-43; these read GDEGKGK and GHT. D14 acts as the Proton acceptor in catalysis. D14 and G41 together coordinate Mg(2+). Residues 14-17, 39-42, T130, R144, Q225, T240, and R310 each bind IMP; these read DEGK and NAGH. H42 functions as the Proton donor in the catalytic mechanism. Substrate is bound at residue 306-312; sequence ATTGRLR. GTP contacts are provided by residues R312, 338–340, and 421–423; these read KLD and STG.

Belongs to the adenylosuccinate synthetase family. In terms of assembly, homodimer. The cofactor is Mg(2+).

Its subcellular location is the cytoplasm. The catalysed reaction is IMP + L-aspartate + GTP = N(6)-(1,2-dicarboxyethyl)-AMP + GDP + phosphate + 2 H(+). It functions in the pathway purine metabolism; AMP biosynthesis via de novo pathway; AMP from IMP: step 1/2. In terms of biological role, plays an important role in the de novo pathway of purine nucleotide biosynthesis. Catalyzes the first committed step in the biosynthesis of AMP from IMP. The sequence is that of Adenylosuccinate synthetase from Vibrio parahaemolyticus serotype O3:K6 (strain RIMD 2210633).